The chain runs to 300 residues: Haloalkane dehalogenase (300 aa).

An AB hydrolase-1 domain is found at 32-155 (AIVFQHGNPT…PAVRGVFQGF (124 aa)). The active-site Nucleophile is the D109. E133 serves as the catalytic Proton donor. The Proton acceptor role is filled by H273.

It belongs to the haloalkane dehalogenase family. Type 2 subfamily. Monomer.

It catalyses the reaction 1-haloalkane + H2O = a halide anion + a primary alcohol + H(+). Its function is as follows. Catalyzes hydrolytic cleavage of carbon-halogen bonds in halogenated aliphatic compounds, leading to the formation of the corresponding primary alcohols, halide ions and protons. The polypeptide is Haloalkane dehalogenase (Mycobacterium bovis (strain ATCC BAA-935 / AF2122/97)).